The following is a 502-amino-acid chain: Probable glycine dehydrogenase (decarboxylating) subunit 2 (502 aa).

Lys-273 is subject to N6-(pyridoxal phosphate)lysine.

It belongs to the GcvP family. C-terminal subunit subfamily. The glycine cleavage system is composed of four proteins: P, T, L and H. In this organism, the P 'protein' is a heterodimer of two subunits. Pyridoxal 5'-phosphate serves as cofactor.

The catalysed reaction is N(6)-[(R)-lipoyl]-L-lysyl-[glycine-cleavage complex H protein] + glycine + H(+) = N(6)-[(R)-S(8)-aminomethyldihydrolipoyl]-L-lysyl-[glycine-cleavage complex H protein] + CO2. Functionally, the glycine cleavage system catalyzes the degradation of glycine. The P protein binds the alpha-amino group of glycine through its pyridoxal phosphate cofactor; CO(2) is released and the remaining methylamine moiety is then transferred to the lipoamide cofactor of the H protein. This is Probable glycine dehydrogenase (decarboxylating) subunit 2 from Pyrococcus horikoshii (strain ATCC 700860 / DSM 12428 / JCM 9974 / NBRC 100139 / OT-3).